The following is a 196-amino-acid chain: ATP-dependent Clp protease proteolytic subunit (196 aa).

The active-site Nucleophile is the Ser-98. Residue His-123 is part of the active site.

Belongs to the peptidase S14 family. As to quaternary structure, fourteen ClpP subunits assemble into 2 heptameric rings which stack back to back to give a disk-like structure with a central cavity, resembling the structure of eukaryotic proteasomes.

Its subcellular location is the cytoplasm. It carries out the reaction Hydrolysis of proteins to small peptides in the presence of ATP and magnesium. alpha-casein is the usual test substrate. In the absence of ATP, only oligopeptides shorter than five residues are hydrolyzed (such as succinyl-Leu-Tyr-|-NHMec, and Leu-Tyr-Leu-|-Tyr-Trp, in which cleavage of the -Tyr-|-Leu- and -Tyr-|-Trp bonds also occurs).. Its function is as follows. Cleaves peptides in various proteins in a process that requires ATP hydrolysis. Has a chymotrypsin-like activity. Plays a major role in the degradation of misfolded proteins. In Geobacillus sp. (strain WCH70), this protein is ATP-dependent Clp protease proteolytic subunit.